The chain runs to 447 residues: UDP-N-acetylmuramoylalanine--D-glutamate ligase (447 aa).

112 to 118 is an ATP binding site; the sequence is GTNGKST.

It belongs to the MurCDEF family.

It localises to the cytoplasm. The catalysed reaction is UDP-N-acetyl-alpha-D-muramoyl-L-alanine + D-glutamate + ATP = UDP-N-acetyl-alpha-D-muramoyl-L-alanyl-D-glutamate + ADP + phosphate + H(+). Its pathway is cell wall biogenesis; peptidoglycan biosynthesis. Its function is as follows. Cell wall formation. Catalyzes the addition of glutamate to the nucleotide precursor UDP-N-acetylmuramoyl-L-alanine (UMA). The polypeptide is UDP-N-acetylmuramoylalanine--D-glutamate ligase (Legionella pneumophila (strain Paris)).